Consider the following 314-residue polypeptide: Taste receptor type 2 member 42 (314 aa).

Over 1–7 (MATEMDK) the chain is Extracellular. A helical transmembrane segment spans residues 8–28 (IFLTLATVEFIIGMLGNVFIG). Over 29–50 (LVNCSEGIKNQKVFSVDFILTC) the chain is Cytoplasmic. A helical membrane pass occupies residues 51–71 (LAISTIGHLLVILFDSCVVGL). The Extracellular segment spans residues 72 to 101 (APHLYATDRVRRPVTMLWHMXNHLTTWLAT). Residues 102-122 (CLSIFYFFKIAHFPHSLFLWL) traverse the membrane as a helical segment. Residues 123 to 127 (RWRMN) lie on the Cytoplasmic side of the membrane. A helical membrane pass occupies residues 128–148 (RVIAILLTLSLFLLIFDCLVL). The Extracellular portion of the chain corresponds to 149-187 (EMFIDXSLNIIDKSNLTLYLDESKTPYDKLSLLKILLSL). N-linked (GlcNAc...) asparagine glycosylation is present at Asn163. A helical membrane pass occupies residues 188-208 (NSFIPFSLCLTSLLFLFLSLV). The Cytoplasmic portion of the chain corresponds to 209 to 238 (RHTRNLKLSSLGSRDSSTEAHRRAMKMVMS). Residues 239–259 (LLFLFIVHFFSLQVANWTFCI) form a helical membrane-spanning segment. Residues 260–265 (LGNNKY) lie on the Extracellular side of the membrane. The helical transmembrane segment at 266–286 (TQFVTLALHAFPSCHSFILIL) threads the bilayer. The Cytoplasmic segment spans residues 287–314 (GNSKLRQTAVRLLWHLRNYTKRPNPLPL).

This sequence belongs to the G-protein coupled receptor T2R family.

The protein localises to the membrane. Functionally, receptor that may play a role in the perception of bitterness and is gustducin-linked. May play a role in sensing the chemical composition of the gastrointestinal content. The activity of this receptor may stimulate alpha gustducin, mediate PLC-beta-2 activation and lead to the gating of TRPM5. The sequence is that of Taste receptor type 2 member 42 (TAS2R42) from Macaca mulatta (Rhesus macaque).